A 240-amino-acid chain; its full sequence is Homeobox protein goosecoid (240 aa).

A DNA-binding region (homeobox) is located at residues 146–205 (KRRHRTIFTDEQLEALENLFQETKYPDVGTREQLARKVHLREEKVEVWFKNRRAKWRRQK). Residues 199 to 240 (AKWRRQKRSSSEESENSQKWNKSTKTTSEKIEEGKSDVDSDS) are disordered. A compositionally biased stretch (basic and acidic residues) spans 225-240 (TSEKIEEGKSDVDSDS).

Belongs to the paired homeobox family. Bicoid subfamily.

It is found in the nucleus. This Danio rerio (Zebrafish) protein is Homeobox protein goosecoid (gsc).